The primary structure comprises 643 residues: tRNA 5-methylaminomethyl-2-thiouridine biosynthesis bifunctional protein MnmC (643 aa).

The tRNA (mnm(5)s(2)U34)-methyltransferase stretch occupies residues 1-223 (MPDRLVSATL…VDDRLVGDYA (223 aa)). The interval 247 to 643 (IGAGLAGCAV…LRARRVGSAG (397 aa)) is FAD-dependent cmnm(5)s(2)U34 oxidoreductase.

In the N-terminal section; belongs to the methyltransferase superfamily. tRNA (mnm(5)s(2)U34)-methyltransferase family. The protein in the C-terminal section; belongs to the DAO family. FAD is required as a cofactor.

Its subcellular location is the cytoplasm. It carries out the reaction 5-aminomethyl-2-thiouridine(34) in tRNA + S-adenosyl-L-methionine = 5-methylaminomethyl-2-thiouridine(34) in tRNA + S-adenosyl-L-homocysteine + H(+). Catalyzes the last two steps in the biosynthesis of 5-methylaminomethyl-2-thiouridine (mnm(5)s(2)U) at the wobble position (U34) in tRNA. Catalyzes the FAD-dependent demodification of cmnm(5)s(2)U34 to nm(5)s(2)U34, followed by the transfer of a methyl group from S-adenosyl-L-methionine to nm(5)s(2)U34, to form mnm(5)s(2)U34. The sequence is that of tRNA 5-methylaminomethyl-2-thiouridine biosynthesis bifunctional protein MnmC from Burkholderia orbicola (strain MC0-3).